Reading from the N-terminus, the 234-residue chain is UPF0173 metal-dependent hydrolase Meso_1362 (234 aa).

The protein belongs to the UPF0173 family.

In Chelativorans sp. (strain BNC1), this protein is UPF0173 metal-dependent hydrolase Meso_1362.